The following is a 504-amino-acid chain: ATP synthase subunit beta (504 aa).

181–188 serves as a coordination point for ATP; that stretch reads GGAGVGKT.

The protein belongs to the ATPase alpha/beta chains family. In terms of assembly, F-type ATPases have 2 components, CF(1) - the catalytic core - and CF(0) - the membrane proton channel. CF(1) has five subunits: alpha(3), beta(3), gamma(1), delta(1), epsilon(1). CF(0) has three main subunits: a(1), b(2) and c(9-12). The alpha and beta chains form an alternating ring which encloses part of the gamma chain. CF(1) is attached to CF(0) by a central stalk formed by the gamma and epsilon chains, while a peripheral stalk is formed by the delta and b chains.

The protein localises to the cell inner membrane. The enzyme catalyses ATP + H2O + 4 H(+)(in) = ADP + phosphate + 5 H(+)(out). Its function is as follows. Produces ATP from ADP in the presence of a proton gradient across the membrane. The catalytic sites are hosted primarily by the beta subunits. This chain is ATP synthase subunit beta, found in Ehrlichia ruminantium (strain Welgevonden).